The following is a 451-amino-acid chain: MREIVHIQGGQCGDQIGAKFWEVISDEHGIDPTGTYNGDSDLQLERVNVYYNEATGGRYVPRAVLMDLEPGTMDSVRAGPYGQLFRPDNFVFGQTGAGNNWAKGHYTEGAELIDSVLDVVRKEAEQCDCLQGFQVTHSLGGGTGSGMGTLLISKIREEYPDRVMMTFSVCPSPKVSDTVVEPYNATLSVHQLVENADEVMVLDNEALYDICFRTLKLTTPTYGDLNHLVCVCMSGVTSSLRFPGQLNADLRKLAVNLIPFPRLHFFMLGFAPLTSRGSQQYRALTVPELTSQCFDAKNMMCAADPRHGRYLTASCMFRGRMSTKEVDEQMLNVQNKNSSYFVEWIPNNIKSSVCDIPPKGLKMSATFVGNSTAIQEMFKRVGEQFTAMFRRKAFLHWYTGEGMDEMEFTEAESNMNDLVSEYQQYQDATAEEEGEYDEDDGGYGDEDDGMM.

Residues Gln-11, Glu-69, Ser-138, Gly-142, Thr-143, Gly-144, Asn-204, and Asn-226 each coordinate GTP. Glu-69 is a binding site for Mg(2+). A compositionally biased stretch (polar residues) spans 417–427 (DLVSEYQQYQD). Residues 417 to 451 (DLVSEYQQYQDATAEEEGEYDEDDGGYGDEDDGMM) form a disordered region. Residues 429-451 (TAEEEGEYDEDDGGYGDEDDGMM) show a composition bias toward acidic residues.

It belongs to the tubulin family. In terms of assembly, dimer of alpha and beta chains. A typical microtubule is a hollow water-filled tube with an outer diameter of 25 nm and an inner diameter of 15 nM. Alpha-beta heterodimers associate head-to-tail to form protofilaments running lengthwise along the microtubule wall with the beta-tubulin subunit facing the microtubule plus end conferring a structural polarity. Microtubules usually have 13 protofilaments but different protofilament numbers can be found in some organisms and specialized cells. It depends on Mg(2+) as a cofactor.

Its subcellular location is the cytoplasm. It localises to the cytoskeleton. Tubulin is the major constituent of microtubules, a cylinder consisting of laterally associated linear protofilaments composed of alpha- and beta-tubulin heterodimers. Microtubules grow by the addition of GTP-tubulin dimers to the microtubule end, where a stabilizing cap forms. Below the cap, tubulin dimers are in GDP-bound state, owing to GTPase activity of alpha-tubulin. This chain is Tubulin beta-4 chain (TUBB4), found in Oomycete-like sp. (strain MacKay2000).